Here is a 213-residue protein sequence, read N- to C-terminus: ATP-dependent Clp protease proteolytic subunit 1 (213 aa).

Ser114 serves as the catalytic Nucleophile. His139 is an active-site residue.

It belongs to the peptidase S14 family. Fourteen ClpP subunits assemble into 2 heptameric rings which stack back to back to give a disk-like structure with a central cavity, resembling the structure of eukaryotic proteasomes.

The protein localises to the cytoplasm. It catalyses the reaction Hydrolysis of proteins to small peptides in the presence of ATP and magnesium. alpha-casein is the usual test substrate. In the absence of ATP, only oligopeptides shorter than five residues are hydrolyzed (such as succinyl-Leu-Tyr-|-NHMec, and Leu-Tyr-Leu-|-Tyr-Trp, in which cleavage of the -Tyr-|-Leu- and -Tyr-|-Trp bonds also occurs).. Functionally, cleaves peptides in various proteins in a process that requires ATP hydrolysis. Has a chymotrypsin-like activity. Plays a major role in the degradation of misfolded proteins. The chain is ATP-dependent Clp protease proteolytic subunit 1 from Pseudomonas aeruginosa (strain ATCC 15692 / DSM 22644 / CIP 104116 / JCM 14847 / LMG 12228 / 1C / PRS 101 / PAO1).